Here is a 439-residue protein sequence, read N- to C-terminus: Xaa-Pro dipeptidase (439 aa).

Mn(2+) contacts are provided by Asp244, Asp255, His335, Glu380, and Glu419.

Belongs to the peptidase M24B family. Bacterial-type prolidase subfamily. It depends on Mn(2+) as a cofactor.

The enzyme catalyses Xaa-L-Pro dipeptide + H2O = an L-alpha-amino acid + L-proline. In terms of biological role, splits dipeptides with a prolyl residue in the C-terminal position. This is Xaa-Pro dipeptidase from Shewanella amazonensis (strain ATCC BAA-1098 / SB2B).